A 612-amino-acid polypeptide reads, in one-letter code: Elongation factor 4 (612 aa).

One can recognise a tr-type G domain in the interval 12 to 194; that stretch reads SRIRNFSIIA…QIVEKVPAPA (183 aa). GTP-binding positions include 24–29 and 141–144; these read DHGKST and NKID.

It belongs to the TRAFAC class translation factor GTPase superfamily. Classic translation factor GTPase family. LepA subfamily.

It localises to the cell membrane. It carries out the reaction GTP + H2O = GDP + phosphate + H(+). Functionally, required for accurate and efficient protein synthesis under certain stress conditions. May act as a fidelity factor of the translation reaction, by catalyzing a one-codon backward translocation of tRNAs on improperly translocated ribosomes. Back-translocation proceeds from a post-translocation (POST) complex to a pre-translocation (PRE) complex, thus giving elongation factor G a second chance to translocate the tRNAs correctly. Binds to ribosomes in a GTP-dependent manner. The polypeptide is Elongation factor 4 (Bacillus pumilus (strain SAFR-032)).